The primary structure comprises 223 residues: Thiopurine S-methyltransferase (223 aa).

Residues Trp-10, Leu-45, Glu-66, and Arg-127 each contribute to the S-adenosyl-L-methionine site.

Belongs to the class I-like SAM-binding methyltransferase superfamily. TPMT family.

The protein localises to the cytoplasm. It catalyses the reaction S-adenosyl-L-methionine + a thiopurine = S-adenosyl-L-homocysteine + a thiopurine S-methylether.. The protein is Thiopurine S-methyltransferase of Shewanella woodyi (strain ATCC 51908 / MS32).